Consider the following 141-residue polypeptide: Large ribosomal subunit protein bL17 (141 aa).

It belongs to the bacterial ribosomal protein bL17 family. As to quaternary structure, part of the 50S ribosomal subunit. Contacts protein L32.

The sequence is that of Large ribosomal subunit protein bL17 from Bartonella bacilliformis (strain ATCC 35685 / KC583 / Herrer 020/F12,63).